The following is a 567-amino-acid chain: MFS-type transporter poxA (567 aa).

Residues 1–23 (MPASDRTSETGDVEKVTAAETPK) are compositionally biased toward basic and acidic residues. The segment at 1-24 (MPASDRTSETGDVEKVTAAETPKE) is disordered. 10 helical membrane passes run 35-55 (ALTG…LFLG), 77-97 (ADIG…QLLA), 108-128 (LVFL…GVAV), 141-161 (GAGA…VVPL), 165-185 (SLIL…GPVI), 197-217 (WCFY…ILFF), 240-260 (LAGC…LQWG), 271-291 (SATI…FLIW), 311-331 (IIAS…VGYF), and 349-369 (VMLL…GVIV). Residue Asn-370 is glycosylated (N-linked (GlcNAc...) asparagine). A run of 4 helical transmembrane segments spans residues 372–392 (TGYF…GSGL), 410–430 (ILQG…QVAL), 436–456 (LIPV…SIML), and 515–535 (AIAG…LVSF). Residues 547 to 567 (EENKKEAAEEEEEVKVAAVEA) form a disordered region.

Belongs to the major facilitator superfamily. TCR/Tet family.

The protein resides in the cell membrane. Functionally, MFS-type transporter; part of the gene cluster that mediates the biosynthesis of oxaleimides, cytotoxic compounds containing an unusual disubstituted succinimide moiety. This Penicillium oxalicum (strain 114-2 / CGMCC 5302) (Penicillium decumbens) protein is MFS-type transporter poxA.